The following is a 165-amino-acid chain: Protein-export protein SecB (165 aa).

This sequence belongs to the SecB family. Homotetramer, a dimer of dimers. One homotetramer interacts with 1 SecA dimer.

It is found in the cytoplasm. Its function is as follows. One of the proteins required for the normal export of preproteins out of the cell cytoplasm. It is a molecular chaperone that binds to a subset of precursor proteins, maintaining them in a translocation-competent state. It also specifically binds to its receptor SecA. The polypeptide is Protein-export protein SecB (Marinobacter nauticus (strain ATCC 700491 / DSM 11845 / VT8) (Marinobacter aquaeolei)).